Reading from the N-terminus, the 597-residue chain is Elongation factor 4 (597 aa).

Residues 2–184 (KHIRNFSIIA…TIVKSIPAPE (183 aa)) enclose the tr-type G domain. Residues 14–19 (DHGKST) and 131–134 (NKID) contribute to the GTP site.

Belongs to the TRAFAC class translation factor GTPase superfamily. Classic translation factor GTPase family. LepA subfamily.

Its subcellular location is the cell inner membrane. The enzyme catalyses GTP + H2O = GDP + phosphate + H(+). Functionally, required for accurate and efficient protein synthesis under certain stress conditions. May act as a fidelity factor of the translation reaction, by catalyzing a one-codon backward translocation of tRNAs on improperly translocated ribosomes. Back-translocation proceeds from a post-translocation (POST) complex to a pre-translocation (PRE) complex, thus giving elongation factor G a second chance to translocate the tRNAs correctly. Binds to ribosomes in a GTP-dependent manner. The polypeptide is Elongation factor 4 (Aliivibrio fischeri (strain MJ11) (Vibrio fischeri)).